An 894-amino-acid chain; its full sequence is Alpha-actinin-2 (894 aa).

An actin-binding region spans residues 1–254 (MNQIEPGVQY…IMTYVSCFYH (254 aa)). Calponin-homology (CH) domains follow at residues 38–142 (KQQR…LRFA) and 151–257 (TSAK…HAFA). Phosphothreonine is present on T237. Spectrin repeat units lie at residues 281 to 391 (RLME…WLLN), 401 to 506 (HLAE…ALER), 516 to 627 (QLHL…SLQE), and 637 to 740 (RLRR…EVET). 2 EF-hand domains span residues 753–788 (EQMNEFRASFNHFDRRKNGLMDHEDFRACLISMGYD) and 789–824 (LGEAEFARIMTLVDPNGQGTVTFQSFIDFMTRETAD). 6 residues coordinate Ca(2+): D766, N770, D777, D802, N804, and T808.

This sequence belongs to the alpha-actinin family. In terms of assembly, homodimer; antiparallel. Also forms heterodimers with ACTN3. Interacts with ADAM12, MYOZ1, MYOZ2 and MYOZ3. Interacts via its C-terminal region with the LDB3 PDZ domain. Interacts with XIRP2. Interacts with DST isoform 1 (via N-terminus). Interacts with PARVB. Interacts with SYNPO2. Post-translationally, ubiquitinated by FBXL22, leading to proteasomal degradation. As to expression, expressed in both skeletal and cardiac muscle.

The protein resides in the cytoplasm. It is found in the myofibril. It localises to the sarcomere. Its subcellular location is the z line. F-actin cross-linking protein which is thought to anchor actin to a variety of intracellular structures. This is a bundling protein. This Homo sapiens (Human) protein is Alpha-actinin-2 (ACTN2).